A 609-amino-acid polypeptide reads, in one-letter code: Putative transcriptional regulatory protein y4pA (609 aa).

Residues 313–533 (IVGRSPSIQQ…LRSVLETAAI (221 aa)) form the Sigma-54 factor interaction domain. ATP is bound at residue 395-404 (HPKATLLIES). Positions 578–597 (RGEAARYLGISRKTLYNKMR) form a DNA-binding region, H-T-H motif.

Probable transcriptional regulator that acts in conjunction with sigma-54. The chain is Putative transcriptional regulatory protein y4pA from Sinorhizobium fredii (strain NBRC 101917 / NGR234).